We begin with the raw amino-acid sequence, 792 residues long: Alpha-1,6-mannosylglycoprotein 6-beta-N-acetylglucosaminyltransferase B (792 aa).

Over 1-24 the chain is Cytoplasmic; the sequence is MITVNPDGKIMVRRCLVTLRPFRL. The helical; Signal-anchor for type II membrane protein transmembrane segment at 25 to 45 threads the bilayer; that stretch reads FVLGIGFFTLCFLMTSLGGQF. At 46–792 the chain is on the lumenal side; that stretch reads SARRLGDSPF…GQVALCQGCL (747 aa). N-linked (GlcNAc...) asparagine glycosylation occurs at Asn127. 4 cysteine pairs are disulfide-bonded: Cys157–Cys195, Cys168–Cys208, Cys184–Cys353, and Cys387–Cys644. Asn675 is a glycosylation site (N-linked (GlcNAc...) asparagine). Disulfide bonds link Cys700/Cys775, Cys704/Cys777, Cys711/Cys764, Cys732/Cys753, and Cys788/Cys791.

Belongs to the glycosyltransferase 18 family. The cofactor is Mn(2+). In terms of tissue distribution, present in brain (at protein level). Predominantly expressed in hippocampus, superficial layers of the brain cortex, striatum, nucleus accumbens, a subset of nuclei in the thalamus, inferior colliculus, brain stem and cerebellum.

It localises to the golgi apparatus membrane. The catalysed reaction is N(4)-{beta-D-GlcNAc-(1-&gt;2)-[beta-D-GlcNAc-(1-&gt;4)]-alpha-D-Man-(1-&gt;3)-[beta-D-GlcNAc-(1-&gt;2)-alpha-D-Man-(1-&gt;6)]-beta-D-Man-(1-&gt;4)-beta-D-GlcNAc-(1-&gt;4)-beta-D-GlcNAc}-L-asparaginyl-[protein] + UDP-N-acetyl-alpha-D-glucosamine = N(4)-{beta-D-GlcNAc-(1-&gt;2)-[beta-D-GlcNAc-(1-&gt;4)]-alpha-D-Man-(1-&gt;3)-[beta-D-GlcNAc-(1-&gt;2)-[beta-D-GlcNAc-(1-&gt;6)]-alpha-D-Man-(1-&gt;6)]-beta-D-Man-(1-&gt;4)-beta-D-GlcNAc-(1-&gt;4)-beta-D-GlcNAc}-L-asparaginyl-[protein] + UDP + H(+). It carries out the reaction 3-O-[N-acetyl-beta-D-glucosaminyl-(1-&gt;2)-alpha-D-mannosyl]-L-seryl-[protein] + UDP-N-acetyl-alpha-D-glucosamine = O(3)-{N-acetyl-beta-D-glucosaminyl-(1-&gt;2)-[N-acetyl-beta-D-glucosaminyl-(1-&gt;6)]-alpha-D-mannosyl}-L-seryl-[protein] + UDP + H(+). The enzyme catalyses 3-O-[N-acetyl-beta-D-glucosaminyl-(1-&gt;2)-alpha-D-mannosyl]-L-threonyl-[protein] + UDP-N-acetyl-alpha-D-glucosamine = O(3)-{N-acetyl-beta-D-glucosaminyl-(1-&gt;2)-[N-acetyl-beta-D-glucosaminyl-(1-&gt;6)]-alpha-D-mannosyl}-L-threonyl-[protein] + UDP + H(+). It functions in the pathway protein modification; protein glycosylation. Functionally, glycosyltransferase that acts on alpha-linked mannose of N-glycans and O-mannosyl glycans. Catalyzes the transfer of N-acetylglucosamine (GlcNAc) to the beta 1-6 linkage of the mannose residue of GlcNAc-beta1,2-Man-alpha on both the alpha1,3- and alpha1,6-linked mannose arms in the core structure of N-glycan. Also acts on the GlcNAc-beta1,2-Man-alpha1-Ser/Thr moiety, forming a 2,6-branched structure in brain O-mannosyl glycan. Plays an active role in modulating integrin and laminin-dependent adhesion and migration of neuronal cells via its activity in the O-mannosyl glycan pathway. This is Alpha-1,6-mannosylglycoprotein 6-beta-N-acetylglucosaminyltransferase B (Mgat5b) from Mus musculus (Mouse).